Reading from the N-terminus, the 424-residue chain is Gamma-glutamyl phosphate reductase (424 aa).

Belongs to the gamma-glutamyl phosphate reductase family.

It localises to the cytoplasm. It carries out the reaction L-glutamate 5-semialdehyde + phosphate + NADP(+) = L-glutamyl 5-phosphate + NADPH + H(+). It participates in amino-acid biosynthesis; L-proline biosynthesis; L-glutamate 5-semialdehyde from L-glutamate: step 2/2. Catalyzes the NADPH-dependent reduction of L-glutamate 5-phosphate into L-glutamate 5-semialdehyde and phosphate. The product spontaneously undergoes cyclization to form 1-pyrroline-5-carboxylate. This Shewanella sediminis (strain HAW-EB3) protein is Gamma-glutamyl phosphate reductase.